The following is a 638-amino-acid chain: Threonine--tRNA ligase (638 aa).

Residues 1 to 61 (MPNITLPDGS…EADTPLAIVT (61 aa)) enclose the TGS domain. Positions 242–533 (DHRKLGRLLD…LIEHYAGALP (292 aa)) are catalytic. Positions 333, 384, and 510 each coordinate Zn(2+).

Belongs to the class-II aminoacyl-tRNA synthetase family. As to quaternary structure, homodimer. Zn(2+) is required as a cofactor.

It localises to the cytoplasm. The enzyme catalyses tRNA(Thr) + L-threonine + ATP = L-threonyl-tRNA(Thr) + AMP + diphosphate + H(+). In terms of biological role, catalyzes the attachment of threonine to tRNA(Thr) in a two-step reaction: L-threonine is first activated by ATP to form Thr-AMP and then transferred to the acceptor end of tRNA(Thr). Also edits incorrectly charged L-seryl-tRNA(Thr). The protein is Threonine--tRNA ligase of Aromatoleum aromaticum (strain DSM 19018 / LMG 30748 / EbN1) (Azoarcus sp. (strain EbN1)).